A 686-amino-acid chain; its full sequence is Polyribonucleotide nucleotidyltransferase (686 aa).

Positions 478 and 484 each coordinate Mg(2+). The 60-residue stretch at 545–604 folds into the KH domain; that stretch reads PRVEVIQIPTDKIGLLIGPGGKTINALQDEYGVNISVENDGTVYVAGVEGMSVKAAVSAI. The S1 motif domain maps to 614-684; sequence GDIYVGKVVK…KQNRISLEMV (71 aa).

Belongs to the polyribonucleotide nucleotidyltransferase family. It depends on Mg(2+) as a cofactor.

The protein resides in the cytoplasm. The enzyme catalyses RNA(n+1) + phosphate = RNA(n) + a ribonucleoside 5'-diphosphate. In terms of biological role, involved in mRNA degradation. Catalyzes the phosphorolysis of single-stranded polyribonucleotides processively in the 3'- to 5'-direction. This is Polyribonucleotide nucleotidyltransferase from Rubrobacter xylanophilus (strain DSM 9941 / JCM 11954 / NBRC 16129 / PRD-1).